A 761-amino-acid chain; its full sequence is MSAHPVDTVTAATATPDVAQPFKELGLKDDEYARIKEILGRRPTEAELAMYSVMWSEHCSYKSSKVHLRYFGETTTDEMRSSMLAGIGENAGVVDIGDGWAVTFKVESHNHPSYVEPYQGAATGVGGIVRDIMAMGARPIAVMDQLRFGAADAPDTRRVVDGVVRGVGGYGNSLGLPNIGGETVFDESYAGNPLVNALCAGTMRVEDLHLAFASGAGNKIILFGARTGLDGIGGVSVLASETFDGDESGTGRKKLPAVQVGDPFTEKVLIECCLELYAAKLVVGIQDLGGAGLSCATSELAAAGDGGMHINLEQVPMRATGMTAAEVLSSESQERMCAVVTPENVDAFMAVCKKWDVLATDIGEVTDGDRLTISWHGETVVDVPPRTVAHEGPVYERPVQRPASQDALVANTTAGLKRPESADELKATLLKMIASPALCSRKWITEQYDRYVRGNTVLAENADSGVIRVDEKTGRGIALATDASGRYTALDPYAGAQLALAEAFRNVAVTGATPKAVSNCLNFGSPEDPGVMWQFQQAVRGLADGCATLGIPVTGGNVSFYNQTGSTAILPTPVVAVLGVIDDVHRRIPTGLGLEPGETLILLGDTNDEFDGSIWSQVEHGHLGGVPPKVDLEREQLLADILLAASRDGLVSAAHDLSEGGLAQAVVEAALAGETGCRILLPDDADPFVTLFSESSGRVLVAVPRTEETRFTGMCTARNLPWVRIGVVDEGSDSVEVQGQFSVSLAELRTTFEGTLPALFG.

His58 is an active-site residue. The ATP site is built by Tyr61 and Lys105. Glu107 lines the Mg(2+) pocket. Substrate is bound by residues 108-111 (SHNH) and Arg130. The Proton acceptor role is filled by His109. Asp131 lines the Mg(2+) pocket. Residue Gln259 coordinates substrate. Position 287 (Asp287) interacts with Mg(2+). Residue 331–333 (ESQ) coordinates substrate. ATP-binding residues include Asn519 and Gly556. Position 557 (Asn557) interacts with Mg(2+). Residue Ser559 participates in substrate binding.

Belongs to the FGAMS family. Monomer. Part of the FGAM synthase complex composed of 1 PurL, 1 PurQ and 2 PurS subunits.

It localises to the cytoplasm. The enzyme catalyses N(2)-formyl-N(1)-(5-phospho-beta-D-ribosyl)glycinamide + L-glutamine + ATP + H2O = 2-formamido-N(1)-(5-O-phospho-beta-D-ribosyl)acetamidine + L-glutamate + ADP + phosphate + H(+). Its pathway is purine metabolism; IMP biosynthesis via de novo pathway; 5-amino-1-(5-phospho-D-ribosyl)imidazole from N(2)-formyl-N(1)-(5-phospho-D-ribosyl)glycinamide: step 1/2. Part of the phosphoribosylformylglycinamidine synthase complex involved in the purines biosynthetic pathway. Catalyzes the ATP-dependent conversion of formylglycinamide ribonucleotide (FGAR) and glutamine to yield formylglycinamidine ribonucleotide (FGAM) and glutamate. The FGAM synthase complex is composed of three subunits. PurQ produces an ammonia molecule by converting glutamine to glutamate. PurL transfers the ammonia molecule to FGAR to form FGAM in an ATP-dependent manner. PurS interacts with PurQ and PurL and is thought to assist in the transfer of the ammonia molecule from PurQ to PurL. The protein is Phosphoribosylformylglycinamidine synthase subunit PurL of Rhodococcus opacus (strain B4).